Consider the following 353-residue polypeptide: Histidinol-phosphate aminotransferase (353 aa).

Residue lysine 211 is modified to N6-(pyridoxal phosphate)lysine.

This sequence belongs to the class-II pyridoxal-phosphate-dependent aminotransferase family. Histidinol-phosphate aminotransferase subfamily. As to quaternary structure, homodimer. Pyridoxal 5'-phosphate serves as cofactor.

It carries out the reaction L-histidinol phosphate + 2-oxoglutarate = 3-(imidazol-4-yl)-2-oxopropyl phosphate + L-glutamate. It functions in the pathway amino-acid biosynthesis; L-histidine biosynthesis; L-histidine from 5-phospho-alpha-D-ribose 1-diphosphate: step 7/9. The chain is Histidinol-phosphate aminotransferase from Klebsiella pneumoniae (strain 342).